We begin with the raw amino-acid sequence, 142 residues long: Lutropin subunit beta (142 aa).

The first 21 residues, 1-21 (MEMLQGLLLLWLLLNVGGVWT), serve as a signal peptide directing secretion. 6 cysteine pairs are disulfide-bonded: Cys-30–Cys-78, Cys-44–Cys-93, Cys-47–Cys-131, Cys-55–Cys-109, Cys-59–Cys-111, and Cys-114–Cys-121. Asn-34 is a glycosylation site (N-linked (GlcNAc...) asparagine).

This sequence belongs to the glycoprotein hormones subunit beta family. As to quaternary structure, heterodimer of a common alpha chain and a unique beta chain which confers biological specificity to thyrotropin, lutropin, follitropin and gonadotropin.

It is found in the secreted. Functionally, promotes spermatogenesis and ovulation by stimulating the testes and ovaries to synthesize steroids. The protein is Lutropin subunit beta (LHB) of Panthera tigris altaica (Siberian tiger).